The sequence spans 398 residues: tRNA pseudouridine synthase D (398 aa).

The active-site Nucleophile is Asp76. The TRUD domain occupies 151 to 361 (GVPNRFGVQR…MEGERRPLRV (211 aa)).

It belongs to the pseudouridine synthase TruD family.

The enzyme catalyses uridine(13) in tRNA = pseudouridine(13) in tRNA. In terms of biological role, responsible for synthesis of pseudouridine from uracil-13 in transfer RNAs. The chain is tRNA pseudouridine synthase D from Geobacter sp. (strain M21).